Here is a 251-residue protein sequence, read N- to C-terminus: Imidazole glycerol phosphate synthase subunit HisF (251 aa).

Residues Asp11 and Asp130 contribute to the active site.

It belongs to the HisA/HisF family. In terms of assembly, heterodimer of HisH and HisF.

The protein resides in the cytoplasm. The catalysed reaction is 5-[(5-phospho-1-deoxy-D-ribulos-1-ylimino)methylamino]-1-(5-phospho-beta-D-ribosyl)imidazole-4-carboxamide + L-glutamine = D-erythro-1-(imidazol-4-yl)glycerol 3-phosphate + 5-amino-1-(5-phospho-beta-D-ribosyl)imidazole-4-carboxamide + L-glutamate + H(+). It functions in the pathway amino-acid biosynthesis; L-histidine biosynthesis; L-histidine from 5-phospho-alpha-D-ribose 1-diphosphate: step 5/9. In terms of biological role, IGPS catalyzes the conversion of PRFAR and glutamine to IGP, AICAR and glutamate. The HisF subunit catalyzes the cyclization activity that produces IGP and AICAR from PRFAR using the ammonia provided by the HisH subunit. The protein is Imidazole glycerol phosphate synthase subunit HisF of Pelagibacter ubique (strain HTCC1062).